The following is a 354-amino-acid chain: Chorismate synthase (354 aa).

NADP(+) contacts are provided by arginine 48 and arginine 54. FMN contacts are provided by residues 125-127, 238-239, glycine 278, 293-297, and arginine 319; these read RSS, NA, and KPTSS.

The protein belongs to the chorismate synthase family. In terms of assembly, homotetramer. The cofactor is FMNH2.

It catalyses the reaction 5-O-(1-carboxyvinyl)-3-phosphoshikimate = chorismate + phosphate. The protein operates within metabolic intermediate biosynthesis; chorismate biosynthesis; chorismate from D-erythrose 4-phosphate and phosphoenolpyruvate: step 7/7. In terms of biological role, catalyzes the anti-1,4-elimination of the C-3 phosphate and the C-6 proR hydrogen from 5-enolpyruvylshikimate-3-phosphate (EPSP) to yield chorismate, which is the branch point compound that serves as the starting substrate for the three terminal pathways of aromatic amino acid biosynthesis. This reaction introduces a second double bond into the aromatic ring system. This Buchnera aphidicola subsp. Acyrthosiphon pisum (strain 5A) protein is Chorismate synthase.